The sequence spans 302 residues: Sulfate adenylyltransferase subunit 2 (302 aa).

It belongs to the PAPS reductase family. CysD subfamily. Heterodimer composed of CysD, the smaller subunit, and CysN.

It catalyses the reaction sulfate + ATP + H(+) = adenosine 5'-phosphosulfate + diphosphate. The protein operates within sulfur metabolism; hydrogen sulfide biosynthesis; sulfite from sulfate: step 1/3. Its function is as follows. With CysN forms the ATP sulfurylase (ATPS) that catalyzes the adenylation of sulfate producing adenosine 5'-phosphosulfate (APS) and diphosphate, the first enzymatic step in sulfur assimilation pathway. APS synthesis involves the formation of a high-energy phosphoric-sulfuric acid anhydride bond driven by GTP hydrolysis by CysN coupled to ATP hydrolysis by CysD. In Shigella boydii serotype 4 (strain Sb227), this protein is Sulfate adenylyltransferase subunit 2.